A 260-amino-acid chain; its full sequence is E3 ubiquitin-protein ligase SRFP1 (260 aa).

The segment at 11–80 (FGRMGFGCKH…VAQVCYNCGV (70 aa)) adopts a CHY-type zinc-finger fold. Residues cysteine 18, histidine 20, cysteine 31, cysteine 32, cysteine 38, cysteine 41, histidine 42, histidine 50, cysteine 62, cysteine 65, cysteine 75, cysteine 78, cysteine 87, cysteine 90, histidine 103, cysteine 104, cysteine 107, cysteine 110, histidine 120, cysteine 121, cysteine 124, cysteine 127, histidine 136, and cysteine 138 each coordinate Zn(2+). A CTCHY-type zinc finger spans residues 82 to 146 (MGEYFCSACK…CCIENSMKNN (65 aa)). An RING-type; atypical zinc finger spans residues 147–190 (CPICYEYLFDSLRETSVLRCGHTMHLQCFHEMLKHDKFSCPICS).

As to expression, expressed in roots, leaves, nodes and panicles.

It is found in the nucleus. It localises to the cytoplasm. The enzyme catalyses S-ubiquitinyl-[E2 ubiquitin-conjugating enzyme]-L-cysteine + [acceptor protein]-L-lysine = [E2 ubiquitin-conjugating enzyme]-L-cysteine + N(6)-ubiquitinyl-[acceptor protein]-L-lysine.. Its pathway is protein modification; protein ubiquitination. Possesses E3 ubiquitin-protein ligase activity in vitro. Possesses transactivation activity in yeast cells. May modulate abiotic stress responses by negatively regulating antioxidant enzymes-mediated reactive oxygen species (ROS) removal. This is E3 ubiquitin-protein ligase SRFP1 from Oryza sativa subsp. japonica (Rice).